Reading from the N-terminus, the 23-residue chain is Basic phospholipase A2 CTs-G6 (23 aa).

Ca(2+) is required as a cofactor. Post-translationally, contains 7 disulfide bonds. Expressed by the venom gland.

It localises to the secreted. The catalysed reaction is a 1,2-diacyl-sn-glycero-3-phosphocholine + H2O = a 1-acyl-sn-glycero-3-phosphocholine + a fatty acid + H(+). Its function is as follows. Snake venom phospholipase A2 (PLA2) that induces local edema a few hours after injection (5-10 ug) in the hind paw. PLA2 catalyzes the calcium-dependent hydrolysis of the 2-acyl groups in 3-sn-phosphoglycerides. This Trimeresurus stejnegeri (Chinese green tree viper) protein is Basic phospholipase A2 CTs-G6.